A 185-amino-acid polypeptide reads, in one-letter code: Protein GrpE (185 aa).

Over residues 1–12 (MADEQLNEKDLN) the composition is skewed to basic and acidic residues. The tract at residues 1–22 (MADEQLNEKDLNVEETGAGNAA) is disordered.

Belongs to the GrpE family. As to quaternary structure, homodimer.

Its subcellular location is the cytoplasm. Its function is as follows. Participates actively in the response to hyperosmotic and heat shock by preventing the aggregation of stress-denatured proteins, in association with DnaK and GrpE. It is the nucleotide exchange factor for DnaK and may function as a thermosensor. Unfolded proteins bind initially to DnaJ; upon interaction with the DnaJ-bound protein, DnaK hydrolyzes its bound ATP, resulting in the formation of a stable complex. GrpE releases ADP from DnaK; ATP binding to DnaK triggers the release of the substrate protein, thus completing the reaction cycle. Several rounds of ATP-dependent interactions between DnaJ, DnaK and GrpE are required for fully efficient folding. The sequence is that of Protein GrpE from Pseudomonas putida (strain ATCC 700007 / DSM 6899 / JCM 31910 / BCRC 17059 / LMG 24140 / F1).